We begin with the raw amino-acid sequence, 140 residues long: Dehydratase ustZ (140 aa).

The EthD domain occupies 18-113; it reads PGISTEDYRN…GPDHEKFADT (96 aa).

It belongs to the tpcK family.

The enzyme catalyses naphtopyrone YWA1 = norrubrofusarin + H2O + H(+). It functions in the pathway secondary metabolite biosynthesis. Functionally, dehydratase; part of the gene cluster that mediates the biosynthesis of ustilaginoidins, dimeric gamma-naphthopyrones isolated from different fungal species. The first step in the biosynthesis of ustilaginoidins is the production of gamma-naphthopyrone precursor YWA1 by the non-reducing polyketide synthase ustP, via condensation of one acetyl-CoA starter unit with 6 malonyl-CoA units. YWA1 is then probably substrate of the ustZ to yield norrubrofusarin via a dehydration reaction. A key enzyme in the biosynthetic pathway is the laccase ustL, which catalyzes the oxidative dimerization of norrubrofusarin to ustilaginoidin A. It can produce the M- and P-atropisomers in varying amounts, depending on the reaction conditions. For the biosynthesis of 3-methylustilaginoid in derivatives such as chaetochromin A, a methylated derivative of YWA1 is required. The C-methylation is considered to be catalyzed by ustM, the phosphopantetheine attachment site of which indicates that it acts on the growing polyketide chain before release of the product. For the biosynthesis of chaetochromin A, it is assumed that saturation of the D2 double bond takes place before dimerization, and is probably catalyzed by an external reductase because no candidate gene was identified within the cluster. The sequence is that of Dehydratase ustZ from Ustilaginoidea virens (Rice false smut fungus).